The following is a 239-amino-acid chain: MNSIEFPLLDRTTPNSVISTTLNDLSNWSRLSSLWPLLYGTSCCFIEFASLIGSRFDFDRYGLVPRSSPRQADLILTAGTVTMKMAPSLVRLYEQMPEPKYVIAMGACTITGGMFSTDSYSTVRGVDKLIPVDVYLPGCPPKPEAVIDAITKLRKKLSREISEDRMGSQRENRCFTTNHKFYVRRSTHTGNYDQGLLYQSPPTAEIPSETEPFFKYKSSVSSRELGNESGKEDVSIQNK.

4 residues coordinate [4Fe-4S] cluster: C43, C44, C108, and C139. The segment at 217–239 (KSSVSSRELGNESGKEDVSIQNK) is disordered. The span at 225-239 (LGNESGKEDVSIQNK) shows a compositional bias: basic and acidic residues.

Belongs to the complex I 20 kDa subunit family. NDH is composed of at least 16 different subunits, 5 of which are encoded in the nucleus. It depends on [4Fe-4S] cluster as a cofactor.

The protein localises to the plastid. The protein resides in the chloroplast thylakoid membrane. The catalysed reaction is a plastoquinone + NADH + (n+1) H(+)(in) = a plastoquinol + NAD(+) + n H(+)(out). The enzyme catalyses a plastoquinone + NADPH + (n+1) H(+)(in) = a plastoquinol + NADP(+) + n H(+)(out). NDH shuttles electrons from NAD(P)H:plastoquinone, via FMN and iron-sulfur (Fe-S) centers, to quinones in the photosynthetic chain and possibly in a chloroplast respiratory chain. The immediate electron acceptor for the enzyme in this species is believed to be plastoquinone. Couples the redox reaction to proton translocation, and thus conserves the redox energy in a proton gradient. This chain is NAD(P)H-quinone oxidoreductase subunit K, chloroplastic, found in Acorus calamus var. americanus (American sweet flag).